The chain runs to 439 residues: MIKIPKIGFVSLGCPKNLVDSERIITKLKAEGYDLVDSYDNADMVIVNTCGFLNSAIDESLEVIGEAIAENGKVLVTGCLGNKADLIKEKHSEVLSITGPQDYENLIEAVHTHAPIFVNDFVSLVPPQGIKLTPRHYSYLKISEGCNNTCTFCIIPDIRGKLKSRSIDNIMKEAEKLKNAGVKELLVISQDTSAYGVDIKYKSGIWNDKEYQSNILDLATALGDLDMWTRLHYVYPYPHVDKIVPLMAQGKILPYLDVPLQHSSPEVLKRMKRPAHTQKTLDRINKWRDICPDITIRSTFIVGFPGETEADFEHLLDFAEKAQLDRVGCFKYSEVEGAKANQFDNLISEEVKQQRLDEFMGLQAQISADKLQRFVGTEQQVIIDVINKDENYAIGRTKYDAPEVDGQVIIGDALERNLKVGEFATVEITESTEYDLIAD.

One can recognise an MTTase N-terminal domain in the interval 5-115; it reads PKIGFVSLGC…LIEAVHTHAP (111 aa). 6 residues coordinate [4Fe-4S] cluster: Cys14, Cys50, Cys79, Cys146, Cys150, and Cys153. A Radical SAM core domain is found at 132 to 369; sequence LTPRHYSYLK…MGLQAQISAD (238 aa). In terms of domain architecture, TRAM spans 372-439; sequence QRFVGTEQQV…ESTEYDLIAD (68 aa).

The protein belongs to the methylthiotransferase family. RimO subfamily. [4Fe-4S] cluster is required as a cofactor.

The protein resides in the cytoplasm. The enzyme catalyses L-aspartate(89)-[ribosomal protein uS12]-hydrogen + (sulfur carrier)-SH + AH2 + 2 S-adenosyl-L-methionine = 3-methylsulfanyl-L-aspartate(89)-[ribosomal protein uS12]-hydrogen + (sulfur carrier)-H + 5'-deoxyadenosine + L-methionine + A + S-adenosyl-L-homocysteine + 2 H(+). Functionally, catalyzes the methylthiolation of an aspartic acid residue of ribosomal protein uS12. The chain is Ribosomal protein uS12 methylthiotransferase RimO from Francisella philomiragia subsp. philomiragia (strain ATCC 25017 / CCUG 19701 / FSC 153 / O#319-036).